The following is a 476-amino-acid chain: DnaJ protein P58IPK homolog A (476 aa).

An N-terminal signal peptide occupies residues 1–28 (MVAMARWPWRVLLPLLLLHSSPVFFVFA). TPR repeat units follow at residues 36–69 (PSTL…EPNH), 70–103 (SEAY…KPGS), 116–150 (AQNA…SPDC), 152–184 (KAKL…DEDN), 185–218 (LDAL…DPEH), 231–264 (LVKK…DPDH), 269–302 (VHLY…DGEL), and 304–336 (DALT…SPQD). Residues 357–423 (DWYKILGISK…DKRVRYDRGE (67 aa)) enclose the J domain.

Interacts with BIP1.

It localises to the endoplasmic reticulum lumen. Functionally, may play a role in protein folding in the endoplasmic reticulum. This is DnaJ protein P58IPK homolog A from Oryza sativa subsp. japonica (Rice).